The primary structure comprises 282 residues: Thiazole synthase (282 aa).

The Schiff-base intermediate with DXP role is filled by K113. 1-deoxy-D-xylulose 5-phosphate is bound by residues G174, 201–202, and 223–224; these read AG and NT.

It belongs to the ThiG family. Homotetramer. Forms heterodimers with either ThiH or ThiS.

It is found in the cytoplasm. It carries out the reaction [ThiS sulfur-carrier protein]-C-terminal-Gly-aminoethanethioate + 2-iminoacetate + 1-deoxy-D-xylulose 5-phosphate = [ThiS sulfur-carrier protein]-C-terminal Gly-Gly + 2-[(2R,5Z)-2-carboxy-4-methylthiazol-5(2H)-ylidene]ethyl phosphate + 2 H2O + H(+). It participates in cofactor biosynthesis; thiamine diphosphate biosynthesis. Catalyzes the rearrangement of 1-deoxy-D-xylulose 5-phosphate (DXP) to produce the thiazole phosphate moiety of thiamine. Sulfur is provided by the thiocarboxylate moiety of the carrier protein ThiS. In vitro, sulfur can be provided by H(2)S. In Cupriavidus metallidurans (strain ATCC 43123 / DSM 2839 / NBRC 102507 / CH34) (Ralstonia metallidurans), this protein is Thiazole synthase.